Consider the following 755-residue polypeptide: Elongation factor G, mitochondrial (755 aa).

The transit peptide at 1-38 (MFKRVGLIAGIAGPVAGSSRFSAVSFSKRAFSASSKRC) directs the protein to the mitochondrion. Positions 63-344 (KKLRNIGISA…AIVEYLPNPS (282 aa)) constitute a tr-type G domain. GTP contacts are provided by residues 72 to 79 (AHIDSGKT), 143 to 147 (DTPGH), and 197 to 200 (NKMD).

This sequence belongs to the TRAFAC class translation factor GTPase superfamily. Classic translation factor GTPase family. EF-G/EF-2 subfamily.

Its subcellular location is the mitochondrion. It functions in the pathway protein biosynthesis; polypeptide chain elongation. Functionally, mitochondrial GTPase that catalyzes the GTP-dependent ribosomal translocation step during translation elongation. During this step, the ribosome changes from the pre-translocational (PRE) to the post-translocational (POST) state as the newly formed A-site-bound peptidyl-tRNA and P-site-bound deacylated tRNA move to the P and E sites, respectively. Catalyzes the coordinated movement of the two tRNA molecules, the mRNA and conformational changes in the ribosome. The protein is Elongation factor G, mitochondrial of Kluyveromyces lactis (strain ATCC 8585 / CBS 2359 / DSM 70799 / NBRC 1267 / NRRL Y-1140 / WM37) (Yeast).